A 196-amino-acid polypeptide reads, in one-letter code: MSEENKLSESEIKEEAVQTLERINFWISNCDTKISFSLAFAGILLGGFFSSGIITGSLNKLMKGLKEIDKDTPYLKIQYLEITTIVLVVFIILMIVSLTYLFRGKKGSIDTGVFNEADLSKDSILFFGTIQNKSFISFKNSVIEIKKDDLVNDYLSQVYINSKICNRKFTLYNKGVNWLIASTIVFIILNGMFLFL.

3 consecutive transmembrane segments (helical) span residues 34–54 (ISFS…SGII), 82–102 (ITTI…TYLF), and 176–196 (VNWL…FLFL).

The protein localises to the cell inner membrane. Functionally, pycsar (pyrimidine cyclase system for antiphage resistance) provides immunity against bacteriophage. The pyrimidine cyclase (PycC) synthesizes cyclic nucleotides in response to infection; these serve as specific second messenger signals. The signals activate the adjacent effector, leading to bacterial cell death and abortive phage infection. A clade C Pycsar system. Its function is as follows. The effector gene of a two-gene Pycsar system. Expression of this and adjacent uridylate cyclase GmPycC (AC P0DV42) probably confers resistance to bacteriophage. The genes are probably only expressed in response to bacteriophage infection. Probably only responds to cUMP (produced by its cognate NTP cyclase), acts by impairing membrane integrity. The chain is Pycsar effector protein GmPycTM from Gulbenkiania mobilis.